A 582-amino-acid polypeptide reads, in one-letter code: Sulfite reductase [NADPH] hemoprotein beta-component (582 aa).

A compositionally biased stretch (basic and acidic residues) spans 1 to 12; sequence MDLKVKVDRSRD. Residues 1–26 form a disordered region; sequence MDLKVKVDRSRDVSQPLDKLGPDETL. Positions 447, 453, 492, and 496 each coordinate [4Fe-4S] cluster. Cys496 contributes to the siroheme binding site.

Belongs to the nitrite and sulfite reductase 4Fe-4S domain family. Alpha(8)-beta(8). The alpha component is a flavoprotein, the beta component is a hemoprotein. Siroheme is required as a cofactor. [4Fe-4S] cluster serves as cofactor.

It catalyses the reaction hydrogen sulfide + 3 NADP(+) + 3 H2O = sulfite + 3 NADPH + 4 H(+). It functions in the pathway sulfur metabolism; hydrogen sulfide biosynthesis; hydrogen sulfide from sulfite (NADPH route): step 1/1. Component of the sulfite reductase complex that catalyzes the 6-electron reduction of sulfite to sulfide. This is one of several activities required for the biosynthesis of L-cysteine from sulfate. The protein is Sulfite reductase [NADPH] hemoprotein beta-component of Afipia carboxidovorans (strain ATCC 49405 / DSM 1227 / KCTC 32145 / OM5) (Oligotropha carboxidovorans).